We begin with the raw amino-acid sequence, 130 residues long: Small ribosomal subunit protein uS9 (130 aa).

The protein belongs to the universal ribosomal protein uS9 family.

In Yersinia pseudotuberculosis serotype O:1b (strain IP 31758), this protein is Small ribosomal subunit protein uS9.